A 119-amino-acid polypeptide reads, in one-letter code: uncharacterized protein (119 aa).

2 helical membrane-spanning segments follow: residues 19–39 (FYPSFPFYLSFPFCPSFPSFL) and 68–88 (FPWFLPLLQLVYLCYKVPWLL).

The protein localises to the membrane. This is an uncharacterized protein from Saccharomyces cerevisiae (strain ATCC 204508 / S288c) (Baker's yeast).